The following is an 879-amino-acid chain: DNA replication licensing factor mcm3 (879 aa).

The region spanning 306–513 (VFELLSTSLA…KDRALSEHVL (208 aa)) is the MCM domain. Residue 356–363 (GDPSTAKS) participates in ATP binding. Residues 488–491 (SRFD) carry the Arginine finger motif. The interval 679–778 (RKKHKKQRLE…STLPATSREL (100 aa)) is disordered. Acidic residues predominate over residues 690-713 (GEEFDSEDDNSDDMDIEESEEEMD). Low complexity predominate over residues 732 to 752 (TSQSQESGSEIGSSIAGTAGS). The segment covering 754-778 (NVGTSNTQLSWPSTHSTLPATSREL) has biased composition (polar residues).

It belongs to the MCM family. In terms of assembly, component of the mcm2-7 complex. The complex forms a toroidal hexameric ring with the proposed subunit order mcm2-mcm6-mcm4-mcm7-mcm3-mcm5. The heterodimers of mcm4/mcm6 and mcm3/mcm5 interact with mcm2 and mcm7.

It is found in the nucleus. It carries out the reaction ATP + H2O = ADP + phosphate + H(+). Acts as a component of the mcm2-7 complex (mcm complex) which is the putative replicative helicase essential for 'once per cell cycle' DNA replication initiation and elongation in eukaryotic cells. The active ATPase sites in the mcm2-7 ring are formed through the interaction surfaces of two neighboring subunits such that a critical structure of a conserved arginine finger motif is provided in trans relative to the ATP-binding site of the Walker A box of the adjacent subunit. The six ATPase active sites, however, are likely to contribute differentially to the complex helicase activity. The sequence is that of DNA replication licensing factor mcm3 (mcm3) from Schizosaccharomyces pombe (strain 972 / ATCC 24843) (Fission yeast).